The following is a 448-amino-acid chain: Putative diacyglycerol O-acyltransferase MT3848 (448 aa).

His-136 (proton acceptor) is an active-site residue.

It belongs to the long-chain O-acyltransferase family.

The enzyme catalyses an acyl-CoA + a 1,2-diacyl-sn-glycerol = a triacyl-sn-glycerol + CoA. It participates in glycerolipid metabolism; triacylglycerol biosynthesis. In Mycobacterium tuberculosis (strain CDC 1551 / Oshkosh), this protein is Putative diacyglycerol O-acyltransferase MT3848.